The primary structure comprises 213 residues: MKILVTGFDPFGGAHINPATEAIKLLPQQINGAEIITIQIPTVFRKSIDVLFRAIKKESPDMVICIGQAGGRYDITVERVAINVDDARIEDNEGNLPIDSPIFEDGAPAYFSDLPIKAMVQAMQAANIPASISNTAGTFVCNHLMYAALHYASQYQPDMKVGFIHIPYLVEQVVGKANTPSMNIQDIVRGLTVAIHAAIENKRDIKVQGGAIC.

Residues glutamate 78, cysteine 141, and histidine 165 contribute to the active site.

It belongs to the peptidase C15 family. Homotetramer.

The protein localises to the cytoplasm. It catalyses the reaction Release of an N-terminal pyroglutamyl group from a polypeptide, the second amino acid generally not being Pro.. In terms of biological role, removes 5-oxoproline from various penultimate amino acid residues except L-proline. This chain is Pyrrolidone-carboxylate peptidase, found in Alkaliphilus oremlandii (strain OhILAs) (Clostridium oremlandii (strain OhILAs)).